The following is a 317-amino-acid chain: tRNA(Met) cytidine acetate ligase (317 aa).

Residues 6 to 19, G100, N157, and R182 each bind ATP; that span reads IAEY…HIYQ.

Belongs to the TmcAL family.

It is found in the cytoplasm. It catalyses the reaction cytidine(34) in elongator tRNA(Met) + acetate + ATP = N(4)-acetylcytidine(34) in elongator tRNA(Met) + AMP + diphosphate. In terms of biological role, catalyzes the formation of N(4)-acetylcytidine (ac(4)C) at the wobble position of elongator tRNA(Met), using acetate and ATP as substrates. First activates an acetate ion to form acetyladenylate (Ac-AMP) and then transfers the acetyl group to tRNA to form ac(4)C34. In Mesomycoplasma hyopneumoniae (strain 232) (Mycoplasma hyopneumoniae), this protein is tRNA(Met) cytidine acetate ligase.